Reading from the N-terminus, the 634-residue chain is uncharacterized protein (634 aa).

A signal peptide spans 1–40 (MWLQQRLKGLPGLLSSSWARRLLCLLGLLVLLLWFAGSGA). Residues 41–589 (RRAAGGLQLL…DEHMAQQDPG (549 aa)) lie on the Extracellular side of the membrane. Asn363 carries N-linked (GlcNAc...) asparagine glycosylation. A helical transmembrane segment spans residues 590-610 (LPFLFWFSVASLITLFHLFLF). At 611–634 (KLIYNEYCGPGAKPFFRNKEDPSV) the chain is on the cytoplasmic side.

Its subcellular location is the membrane. This is an uncharacterized protein from Bos taurus (Bovine).